The following is a 420-amino-acid chain: Reticulon-4 receptor-like 2 (420 aa).

The signal sequence occupies residues M1–S30. Intrachain disulfides connect C31-C37 and C35-C46. The region spanning C31 to P60 is the LRRNT domain. N50 carries N-linked (GlcNAc...) asparagine glycosylation. LRR repeat units follow at residues S61–P82, N83–H104, A107–G129, R132–G153, S156–D177, N180–G201, S204–G225, and R228–D249. N93 carries an N-linked (GlcNAc...) asparagine glycan. N236 carries N-linked (GlcNAc...) asparagine glycosylation. Residues N261–P312 form the LRRCT domain. 2 disulfides stabilise this stretch: C265–C288 and C267–C310. A disordered region spans residues V286–P399. Positions R294–D306 are enriched in basic and acidic residues. The interval P315–S327 is important for interaction with MAG. Residues L351–Q360 are compositionally biased toward basic and acidic residues. The GPI-anchor amidated glycine moiety is linked to residue G398. Positions P399 to L420 are cleaved as a propeptide — removed in mature form.

Belongs to the Nogo receptor family. Interaction with MAG is controversial, and may be indirect. Interacts with MAG. Does not interact with OMG and RTN4. Undergoes zinc metalloproteinase-mediated ectodomain shedding in neuroblastoma cells; is released both as a full-length ectodomain and an N-terminal fragment containing the leucine-rich repeat (LRR) region of the protein. Post-translationally, N-glycosylated. In terms of tissue distribution, detected in brain. Detected in hippocampus neurons (at protein level).

It localises to the cell membrane. Its subcellular location is the membrane raft. The protein localises to the cell projection. The protein resides in the dendrite. It is found in the axon. It localises to the perikaryon. In terms of biological role, cell surface receptor that plays a functionally redundant role in the inhibition of neurite outgrowth mediated by MAG. Plays a functionally redundant role in postnatal brain development. Contributes to normal axon migration across the brain midline and normal formation of the corpus callosum. Does not seem to play a significant role in regulating axon regeneration in the adult central nervous system. Protects motoneurons against apoptosis; protection against apoptosis is probably mediated by MAG. Like other family members, plays a role in restricting the number dendritic spines and the number of synapses that are formed during brain development. Signaling mediates activation of Rho and downstream reorganization of the actin cytoskeleton. The polypeptide is Reticulon-4 receptor-like 2 (Mus musculus (Mouse)).